Here is a 335-residue protein sequence, read N- to C-terminus: Mevalonate kinase (335 aa).

111–121 serves as a coordination point for ATP; that stretch reads PVGAGLGSSAA. Asp162 serves as the catalytic Proton acceptor.

Belongs to the GHMP kinase family. Mevalonate kinase subfamily. As to quaternary structure, homodimer. Mg(2+) serves as cofactor.

It is found in the cytoplasm. It catalyses the reaction (R)-mevalonate + ATP = (R)-5-phosphomevalonate + ADP + H(+). Its pathway is isoprenoid biosynthesis; isopentenyl diphosphate biosynthesis via mevalonate pathway; isopentenyl diphosphate from (R)-mevalonate: step 1/3. In terms of biological role, catalyzes the phosphorylation of (R)-mevalonate (MVA) to (R)-mevalonate 5-phosphate (MVAP). Functions in the mevalonate (MVA) pathway leading to isopentenyl diphosphate (IPP), a key precursor for the biosynthesis of isoprenoid compounds such as archaeal membrane lipids. The protein is Mevalonate kinase of Pyrococcus horikoshii (strain ATCC 700860 / DSM 12428 / JCM 9974 / NBRC 100139 / OT-3).